The sequence spans 419 residues: Indole prenyltransferase tdiB (419 aa).

Residue 58 to 59 participates in L-tryptophan binding; sequence PS. Residues arginine 81, lysine 165, tyrosine 167, arginine 236, lysine 238, tyrosine 240, tyrosine 330, and tyrosine 394 each contribute to the substrate site.

This sequence belongs to the tryptophan dimethylallyltransferase family.

It carries out the reaction didemethylasterriquinone D + dimethylallyl diphosphate = asterriquinone C1 + diphosphate. The protein operates within secondary metabolite biosynthesis. Functionally, indole prenyltransferase; part of the gene cluster that mediates the biosynthesis of terrequinone A, an antitumor agent. The first step in the biosynthetic pathway for terrequinone A is formation of indole pyruvic acid (IPA) from L-tryptophan by the aminotransferase tdiD. The nonribosomal peptide synthase tdiA then immediately converts unstable IPA to didemethylasterriquinone D (DDAQ D), via condensation of 2 IPA molecules. The symmetric connectivity of the 2 IPA molecules is thought to arise by head-to-tail dual Claisen condensations facilitated by the TE domain. TdiB then catalyzes reverse prenylation by transferring dimethylallyl diphosphate to carbon atom 2' of DDAQ D, to yield asterriquinone C-1. Finally, tdiC and tdiE enzymes robustly convert asterriquinone C-1 to terrequinone A via a transformation involving regular prenylation at carbon atom 5, which requires elimination of the hydroxy group on C-5. The chain is Indole prenyltransferase tdiB from Emericella nidulans (strain FGSC A4 / ATCC 38163 / CBS 112.46 / NRRL 194 / M139) (Aspergillus nidulans).